A 115-amino-acid polypeptide reads, in one-letter code: Toxin-like structure LSTX-R1 (115 aa).

The N-terminal stretch at 1-18 (MKLSLIIIATSLVIAVVA) is a signal peptide. The propeptide occupies 19–51 (FPSKDSAATDFDKTESLENVEERVETALDERPR).

This sequence belongs to the neurotoxin 25 family. F7 subfamily. In terms of processing, contains 4 disulfide bonds. In terms of tissue distribution, expressed by the venom gland.

The protein localises to the secreted. The polypeptide is Toxin-like structure LSTX-R1 (Lycosa singoriensis (Wolf spider)).